A 360-amino-acid polypeptide reads, in one-letter code: Phospho-N-acetylmuramoyl-pentapeptide-transferase (360 aa).

Helical transmembrane passes span 18 to 38, 72 to 92, 94 to 114, 132 to 152, 168 to 188, 199 to 219, 236 to 256, 263 to 283, 288 to 308, and 338 to 358; these read VFSY…FLSL, PTMG…MWAY, SNPY…VGFV, WKYF…YAVG, IMPQ…VGTS, GLAI…AWAT, AGEL…FLWF, VFMG…IAVL, FLLL…ILQV, and VIVR…ATLK.

This sequence belongs to the glycosyltransferase 4 family. MraY subfamily. Mg(2+) serves as cofactor.

It localises to the cell inner membrane. The enzyme catalyses UDP-N-acetyl-alpha-D-muramoyl-L-alanyl-gamma-D-glutamyl-meso-2,6-diaminopimeloyl-D-alanyl-D-alanine + di-trans,octa-cis-undecaprenyl phosphate = di-trans,octa-cis-undecaprenyl diphospho-N-acetyl-alpha-D-muramoyl-L-alanyl-D-glutamyl-meso-2,6-diaminopimeloyl-D-alanyl-D-alanine + UMP. It participates in cell wall biogenesis; peptidoglycan biosynthesis. Catalyzes the initial step of the lipid cycle reactions in the biosynthesis of the cell wall peptidoglycan: transfers peptidoglycan precursor phospho-MurNAc-pentapeptide from UDP-MurNAc-pentapeptide onto the lipid carrier undecaprenyl phosphate, yielding undecaprenyl-pyrophosphoryl-MurNAc-pentapeptide, known as lipid I. The sequence is that of Phospho-N-acetylmuramoyl-pentapeptide-transferase from Serratia proteamaculans (strain 568).